A 455-amino-acid chain; its full sequence is MASRTNTSSYKRMFGGERPAMVRSTYSSRQYSSPVRTTSRVSYSSASSASPSIYMSKGARVRSSGPLPRLATETLDFGLADAINTEFKTNRTNEKAEMQHLNDRFASYIDKVRFLEQQNKILIAELEQMRGKGSSRVGDLYQDEMRELRRQVDQLTNEKATVEVDRDNLGEDIERLKEKLQEEMLQREDAENTLRGFRQDVDNASLARLHLETKVESLQEEIAFLKKLHDEELAELQIQIQEQHVQIDMEVAKPDLTAALKDVRQQYETLASRNLQESEEWYKSKFADLSEAAARNNEAIRLAKQEANDYRRQLQSLTCDLEALKGTNESLERQLREMEDNFSMEASGYQDTIARLEDDIRNMKDEMARHLREYQDLLNVKMALDIEIATYRKLLEGEESRITTPFPNLSSLTLRETMKETRPAMDSLSKKVVIKTIETRDGHIINESSQNDDLE.

Residues 1 to 87 (MASRTNTSSY…GLADAINTEF (87 aa)) are head. The stretch at 87 to 122 (FKTNRTNEKAEMQHLNDRFASYIDKVRFLEQQNKIL) forms a coiled coil. Positions 88-122 (KTNRTNEKAEMQHLNDRFASYIDKVRFLEQQNKIL) are coil 1A. The IF rod domain occupies 94-402 (EKAEMQHLND…KLLEGEESRI (309 aa)). Residues 123–144 (IAELEQMRGKGSSRVGDLYQDE) are linker 1. A coiled-coil region spans residues 145 to 236 (MRELRRQVDQ…KLHDEELAEL (92 aa)). The coil 1B stretch occupies residues 145–236 (MRELRRQVDQ…KLHDEELAEL (92 aa)). Residues 237-259 (QIQIQEQHVQIDMEVAKPDLTAA) form a linker 12 region. Residues 260-398 (LKDVRQQYET…ATYRKLLEGE (139 aa)) form a coil 2 region. The stretch at 294-398 (ARNNEAIRLA…ATYRKLLEGE (105 aa)) forms a coiled coil. Positions 399-455 (ESRITTPFPNLSSLTLRETMKETRPAMDSLSKKVVIKTIETRDGHIINESSQNDDLE) are tail.

Belongs to the intermediate filament family. As to quaternary structure, homomer assembled from elementary dimers. Post-translationally, one of the most prominent phosphoproteins in various cells of mesenchymal origin. Phosphorylation is enhanced during cell division, at which time vimentin filaments are significantly reorganized.

The protein localises to the cytoplasm. It is found in the cytoskeleton. Its subcellular location is the nucleus matrix. Vimentins are class-III intermediate filaments found in various non-epithelial cells, especially mesenchymal cells. Vimentin is attached to the nucleus, endoplasmic reticulum, and mitochondria, either laterally or terminally. The protein is Vimentin (vim) of Cyprinus carpio (Common carp).